Reading from the N-terminus, the 214-residue chain is Clavatol biosynthesis cluster protein B (214 aa).

A signal peptide spans 1–17 (MAALSFQCLCVASAVRA). Residues Asn-103 and Asn-204 are each glycosylated (N-linked (GlcNAc...) asparagine).

It participates in secondary metabolite biosynthesis. In terms of biological role, part of the cla gene cluster that produces clavatol and ortho-quinone methide. The clavatol biosynthesis cluster cla and the terrestric acid cluster tra are both involved in the production of peniphenones and penilactones. The non-reducing PKS claF is responsible for the formation of clavatol from successive condensations of 3 malonyl-CoA units, presumably with a simple acetyl-CoA starter unit, and 2 methylation steps. The esterase claE probably collaborates with claF by catalyzing the hydrolysis of ACP-bound acyl intermediates to free the ACP from stalled intermediates. The clavatol oxidase claD then converts clavatol to hydroxyclavatol. Spontaneous dehydration of hydroxyclavatol leads to the accumulation of the highly active ortho-quinone methide. On the other hand, the PKS-NRPS hybrid traA is involved in the formation of crustosic acid, with the help of traB and traD. The polyketide synthase module (PKS) of traA is responsible for the synthesis of the polyketide backbone via the condensation of an acetyl-CoA starter unit with 3 malonyl-CoA units. The downstream nonribosomal peptide synthetase (NRPS) module then amidates the carboxyl end of the polyketide with L-malic acid. Because traA lacks a designated enoylreductase (ER) domain, the required activity is provided the enoyl reductase traG. Crustosic acid undergoes decarboxylation and isomerization to the terrestric acid, catalyzed by the 2-oxoglutarate-dependent dioxygenase traH. Both acids are further converted to the 2 gamma-butyrolactones (R)-5-methyltetronic acid and (S)-5-carboxylmethyltetronic acid, with involvement of the cytochrome P450 monooxygenase claJ. Spontaneous addition of the methide to these gamma-butyrolactones leads to peniphenone D and penilactone D, which undergo again stereospecific attacking by methide to give penilactones A and B. The function of claB has not been investigated yet. The protein is Clavatol biosynthesis cluster protein B of Penicillium crustosum (Blue mold fungus).